Here is a 68-residue protein sequence, read N- to C-terminus: Large ribosomal subunit protein bL32 (68 aa).

This sequence belongs to the bacterial ribosomal protein bL32 family.

The protein is Large ribosomal subunit protein bL32 of Orientia tsutsugamushi (strain Boryong) (Rickettsia tsutsugamushi).